Here is a 1011-residue protein sequence, read N- to C-terminus: Histone deacetylase 9 (1011 aa).

Residue Ser22 is modified to Phosphoserine. The segment at 23–27 is interaction with CTBP1; that stretch reads PLDLR. 3 disordered regions span residues 110 to 139, 183 to 249, and 262 to 304; these read RQEQEVERHRREQQLPPLRGKDRGRERAVA, TSLD…KDGN, and TESS…EQMV. Residues 136–154 form an interaction with MEF2 region; sequence RAVASTEVKQKLQEFLLSK. The segment at 175 to 343 is interaction with MAPK10; the sequence is LWYTAAHHTS…LPAVPSQLNA (169 aa). Polar residues predominate over residues 185 to 199; sequence LDQSSPPLSGTSPSY. Positions 208–219 are enriched in basic and acidic residues; it reads DAKDDFPLRKTA. Residues 218–261 form an interaction with ETV6 region; it reads TASEPNLKVRSRLKQKVAERRSSPLLRRKDGNVVTSFKKRMFEV. A phosphoserine mark is found at Ser220 and Ser240. The span at 233 to 248 shows a compositional bias: basic and acidic residues; that stretch reads KVAERRSSPLLRRKDG. Residues 262–285 show a composition bias toward low complexity; it reads TESSVSSSSPGSGPSSPNNGPTGS. Ser451 carries the phosphoserine modification. The disordered stretch occupies residues 494–536; it reads QLKQPGSHLEEAEEELQGDQAMQEDRAPSSGNSTRSDSSACVD. Residues 522–532 are compositionally biased toward polar residues; the sequence is SSGNSTRSDSS. The residue at position 554 (Ser554) is a Phosphoserine. A histone deacetylase region spans residues 631–978; the sequence is SATGIAYDPL…VNALLGNELE (348 aa). The Zn(2+) site is built by Cys646, Cys648, His654, and Cys731. The active site involves His783.

Belongs to the histone deacetylase family. HD type 2 subfamily. Homodimer. Interacts with CTBP1. The phosphorylated form interacts with 14-3-3. Interacts with HDAC1 and HDAC3, and probably with HDAC4 and HDAC5. Interacts with MEF2, MAPK10, ETV6, NCOR1 and BCL6. Interacts with FOXP3 in the absence of T-cell stimulation. In terms of processing, phosphorylated on Ser-220 and Ser-450; which promotes 14-3-3-binding, impairs interaction with MEF2, and antagonizes antimyogenic activity. Phosphorylated on Ser-240; which impairs nuclear accumulation. Isoform 7 is phosphorylated on Tyr-1010. Phosphorylated by the PKC kinases PKN1 and PKN2, impairing nuclear import. Sumoylated. Broadly expressed, with highest levels in brain, heart, muscle and testis. Isoform 3 is present in human bladder carcinoma cells (at protein level).

The protein localises to the nucleus. The catalysed reaction is N(6)-acetyl-L-lysyl-[histone] + H2O = L-lysyl-[histone] + acetate. With respect to regulation, inhibited by Trichostatin A (TSA) and suberoylanilide hydroxamic acid. Responsible for the deacetylation of lysine residues on the N-terminal part of the core histones (H2A, H2B, H3 and H4). Histone deacetylation gives a tag for epigenetic repression and plays an important role in transcriptional regulation, cell cycle progression and developmental events. Represses MEF2-dependent transcription. In terms of biological role, isoform 3 lacks active site residues and therefore is catalytically inactive. Represses MEF2-dependent transcription by recruiting HDAC1 and/or HDAC3. Seems to inhibit skeletal myogenesis and to be involved in heart development. Protects neurons from apoptosis, both by inhibiting JUN phosphorylation by MAPK10 and by repressing JUN transcription via HDAC1 recruitment to JUN promoter. This Homo sapiens (Human) protein is Histone deacetylase 9 (HDAC9).